A 349-amino-acid chain; its full sequence is Holliday junction branch migration complex subunit RuvB (349 aa).

The large ATPase domain (RuvB-L) stretch occupies residues Met1–Tyr183. Residues Leu22, Arg23, Gly64, Lys67, Thr68, Thr69, Glu130–Phe132, Arg173, Tyr183, and Arg220 contribute to the ATP site. Position 68 (Thr68) interacts with Mg(2+). Residues Thr184–Glu254 form a small ATPAse domain (RuvB-S) region. The segment at Ser257–Glu349 is head domain (RuvB-H). DNA is bound by residues Arg293, Arg312, and Arg317.

Belongs to the RuvB family. Homohexamer. Forms an RuvA(8)-RuvB(12)-Holliday junction (HJ) complex. HJ DNA is sandwiched between 2 RuvA tetramers; dsDNA enters through RuvA and exits via RuvB. An RuvB hexamer assembles on each DNA strand where it exits the tetramer. Each RuvB hexamer is contacted by two RuvA subunits (via domain III) on 2 adjacent RuvB subunits; this complex drives branch migration. In the full resolvosome a probable DNA-RuvA(4)-RuvB(12)-RuvC(2) complex forms which resolves the HJ.

The protein resides in the cytoplasm. It catalyses the reaction ATP + H2O = ADP + phosphate + H(+). In terms of biological role, the RuvA-RuvB-RuvC complex processes Holliday junction (HJ) DNA during genetic recombination and DNA repair, while the RuvA-RuvB complex plays an important role in the rescue of blocked DNA replication forks via replication fork reversal (RFR). RuvA specifically binds to HJ cruciform DNA, conferring on it an open structure. The RuvB hexamer acts as an ATP-dependent pump, pulling dsDNA into and through the RuvAB complex. RuvB forms 2 homohexamers on either side of HJ DNA bound by 1 or 2 RuvA tetramers; 4 subunits per hexamer contact DNA at a time. Coordinated motions by a converter formed by DNA-disengaged RuvB subunits stimulates ATP hydrolysis and nucleotide exchange. Immobilization of the converter enables RuvB to convert the ATP-contained energy into a lever motion, pulling 2 nucleotides of DNA out of the RuvA tetramer per ATP hydrolyzed, thus driving DNA branch migration. The RuvB motors rotate together with the DNA substrate, which together with the progressing nucleotide cycle form the mechanistic basis for DNA recombination by continuous HJ branch migration. Branch migration allows RuvC to scan DNA until it finds its consensus sequence, where it cleaves and resolves cruciform DNA. The polypeptide is Holliday junction branch migration complex subunit RuvB (Rhodopseudomonas palustris (strain TIE-1)).